A 562-amino-acid polypeptide reads, in one-letter code: Glycine betaine/proline/choline/ectoine transporter VP1456 (562 aa).

12 consecutive transmembrane segments (helical) span residues 68-88 (PVFGISAGLVVFCLISLLLVE), 110-130 (FFMWSTNFFLLFAVGLLFSPL), 147-167 (VSWLSMLFAAGMGIGLLFWSV), 203-223 (WGVHGWSIYALVALALAFFAF), 243-263 (AWGWLGHVIDILAVLSTLFGL), 287-307 (GIGTQMVVIAFVTFIAVLSVV), 322-342 (MIVAFALLIFITFITFDTAMG), 373-393 (WTVFYWAWWVSWSPFVGMFIA), 404-424 (FLFAVIVIPTLVTLVWMSVFG), 456-476 (VLPYSSVISILSIVLILVFFI), 503-523 (IFWACIEGSIAAVMLWVGGKE), and 531-551 (GVVATGLPFTFVLLLMCVSLV).

This sequence belongs to the BCCT transporter (TC 2.A.15) family.

It is found in the cell inner membrane. In terms of biological role, involved in the uptake of osmoprotectants. Can transport glycine betaine, proline, choline and ectoine. The chain is Glycine betaine/proline/choline/ectoine transporter VP1456 from Vibrio parahaemolyticus serotype O3:K6 (strain RIMD 2210633).